The sequence spans 755 residues: Polyribonucleotide nucleotidyltransferase (755 aa).

Mg(2+)-binding residues include Asp493 and Asp499. Residues 560-619 (PRIMTIQIPVDKIGALIGPGGKTIRNICETTGAQIDIEDDGRVFITTPDGAAARQAISMI) form the KH domain. The S1 motif domain occupies 629-698 (GDIFLGKVVS…TTGKISLSRR (70 aa)). A disordered region spans residues 699-755 (AVLTGETPEERKAAGAAPRPRPREEQRGGRDEPRSLRDELRGPRREGDRPRPRRRDD). Over residues 719–755 (RPREEQRGGRDEPRSLRDELRGPRREGDRPRPRRRDD) the composition is skewed to basic and acidic residues.

This sequence belongs to the polyribonucleotide nucleotidyltransferase family. Requires Mg(2+) as cofactor.

It localises to the cytoplasm. It carries out the reaction RNA(n+1) + phosphate = RNA(n) + a ribonucleoside 5'-diphosphate. In terms of biological role, involved in mRNA degradation. Catalyzes the phosphorolysis of single-stranded polyribonucleotides processively in the 3'- to 5'-direction. The polypeptide is Polyribonucleotide nucleotidyltransferase (Chloroflexus aurantiacus (strain ATCC 29366 / DSM 635 / J-10-fl)).